The primary structure comprises 193 residues: AP-3 complex subunit sigma-2 (193 aa).

The protein belongs to the adaptor complexes small subunit family. As to quaternary structure, adaptor protein complex 3 (AP-3) is a heterotetramer composed of two large adaptins (delta-type subunit AP3D1 and beta-type subunit AP3B1 or AP3B2), a medium adaptin (mu-type subunit AP3M1 or AP3M2) and a small adaptin (sigma-type subunit APS1 or AP3S2). Interacts with AGAP1. AP-3 associates with the BLOC-1 complex.

It is found in the golgi apparatus. It localises to the cytoplasmic vesicle membrane. Functionally, part of the AP-3 complex, an adaptor-related complex which is not clathrin-associated. The complex is associated with the Golgi region as well as more peripheral structures. It facilitates the budding of vesicles from the Golgi membrane and may be directly involved in trafficking to lysosomes. In concert with the BLOC-1 complex, AP-3 is required to target cargos into vesicles assembled at cell bodies for delivery into neurites and nerve terminals. This Bos taurus (Bovine) protein is AP-3 complex subunit sigma-2 (AP3S2).